The sequence spans 297 residues: Ribosome production factor 2 homolog (297 aa).

One can recognise a Brix domain in the interval 28–232; the sequence is KKALFCRGAK…VMRKKLADDA (205 aa).

The protein belongs to the RPF2 family.

Its subcellular location is the nucleus. The protein localises to the nucleolus. This is Ribosome production factor 2 homolog from Caenorhabditis elegans.